A 238-amino-acid chain; its full sequence is Survival of motor neuron-related-splicing factor 30 (238 aa).

The Tudor domain maps to 72–132; that stretch reads SWKVGDKCMA…KPVEEGRKAK (61 aa). A Nuclear localization signal motif is present at residues 142–160; the sequence is KKEMIAQQREYKKKKALKK. Phosphoserine is present on serine 201. Lysine 219 is modified (N6-acetyllysine).

This sequence belongs to the SMN family. Associates with spliceosomes. Associates with U4/U5/U6 tri-snRNP and with U2 snRNP. Interacts (via Tudor domain) with SNRPD3 (via C-terminus); the interaction is direct. As to expression, detected at intermediate levels in skeletal muscle, and at low levels in heart and pancreas.

The protein localises to the nucleus speckle. It is found in the nucleus. Its subcellular location is the cajal body. Functionally, involved in spliceosome assembly. In Homo sapiens (Human), this protein is Survival of motor neuron-related-splicing factor 30 (SMNDC1).